Here is a 205-residue protein sequence, read N- to C-terminus: Molybdenum cofactor guanylyltransferase (205 aa).

GTP contacts are provided by residues 14-16 (LAG), lysine 27, aspartate 77, and aspartate 107. Residue aspartate 107 participates in Mg(2+) binding.

The protein belongs to the MobA family. In terms of assembly, monomer. Mg(2+) serves as cofactor.

The protein resides in the cytoplasm. It carries out the reaction Mo-molybdopterin + GTP + H(+) = Mo-molybdopterin guanine dinucleotide + diphosphate. In terms of biological role, transfers a GMP moiety from GTP to Mo-molybdopterin (Mo-MPT) cofactor (Moco or molybdenum cofactor) to form Mo-molybdopterin guanine dinucleotide (Mo-MGD) cofactor. This is Molybdenum cofactor guanylyltransferase from Burkholderia ambifaria (strain MC40-6).